An 856-amino-acid chain; its full sequence is Paladin (856 aa).

A compositionally biased stretch (low complexity) spans 1–16 (MGTTASTAQQTVSAGT). The interval 1-29 (MGTTASTAQQTVSAGTPFEGLQGSGTMDS) is disordered. A lipid anchor (N-myristoyl glycine) is attached at Gly2. Ser86 is subject to Phosphoserine.

This sequence belongs to the paladin family. In terms of tissue distribution, expressed in endothelial cells, and in certain larger vessels, in mural cells. In the brain, possibly expressed in microglia. Expressed in peripheral blood mononuclear cells (at protein level).

Its subcellular location is the cytoplasm. The protein localises to the cytosol. This chain is Paladin (PALD1), found in Homo sapiens (Human).